The following is a 296-amino-acid chain: Acetyl-coenzyme A carboxylase carboxyl transferase subunit beta (296 aa).

The 270-residue stretch at 25–294 (VWTKCTACEQ…PFVEPELISE (270 aa)) folds into the CoA carboxyltransferase N-terminal domain. The Zn(2+) site is built by cysteine 29, cysteine 32, cysteine 48, and cysteine 51. The segment at 29 to 51 (CTACEQVLYSEELKRNLYVCPKC) adopts a C4-type zinc-finger fold.

The protein belongs to the AccD/PCCB family. As to quaternary structure, acetyl-CoA carboxylase is a heterohexamer composed of biotin carboxyl carrier protein (AccB), biotin carboxylase (AccC) and two subunits each of ACCase subunit alpha (AccA) and ACCase subunit beta (AccD). Zn(2+) serves as cofactor.

The protein resides in the cytoplasm. The enzyme catalyses N(6)-carboxybiotinyl-L-lysyl-[protein] + acetyl-CoA = N(6)-biotinyl-L-lysyl-[protein] + malonyl-CoA. The protein operates within lipid metabolism; malonyl-CoA biosynthesis; malonyl-CoA from acetyl-CoA: step 1/1. In terms of biological role, component of the acetyl coenzyme A carboxylase (ACC) complex. Biotin carboxylase (BC) catalyzes the carboxylation of biotin on its carrier protein (BCCP) and then the CO(2) group is transferred by the transcarboxylase to acetyl-CoA to form malonyl-CoA. This is Acetyl-coenzyme A carboxylase carboxyl transferase subunit beta from Haemophilus influenzae (strain 86-028NP).